A 439-amino-acid polypeptide reads, in one-letter code: Fibulin-7 (439 aa).

Residues 1–24 (MVPSSPRALFLLLLILACPEPRAS) form the signal peptide. The stretch at 28-53 (LSKQQLLSAIRQLQQLLKGQETRFAE) forms a coiled coil. The Sushi domain occupies 79-136 (VSCPALNTPADGRKFGSKYLVDHEVHFTCNPGFRLVGPSSVVCLPNGTWTGEQPHCRG). 11 cysteine pairs are disulfide-bonded: cysteine 81–cysteine 121, cysteine 107–cysteine 134, cysteine 140–cysteine 151, cysteine 145–cysteine 160, cysteine 162–cysteine 171, cysteine 228–cysteine 244, cysteine 240–cysteine 253, cysteine 255–cysteine 268, cysteine 274–cysteine 287, cysteine 281–cysteine 296, and cysteine 301–cysteine 318. The N-linked (GlcNAc...) asparagine glycan is linked to asparagine 124. The EGF-like 1; calcium-binding domain occupies 136 to 172 (GISECSSQPCQNGGTCVEGVNQYRCICPPGRTGNRCQ). Residues 224–269 (DVNECELYGQEGRPRLCMHACVNTPGSYRCTCPGGYRTLADGKSCE) form the EGF-like 2; calcium-binding domain. In terms of domain architecture, EGF-like 3; calcium-binding spans 270-319 (DVDECVGLQPVCPQGTTCINTGGSFQCVSPECPEGSGNVSYVKTSPFQCE). Residue asparagine 307 is glycosylated (N-linked (GlcNAc...) asparagine).

The protein belongs to the fibulin family. In terms of assembly, interacts with heparin, FBLN1, FN1 and DSPP. Preferentially binds dental mesenchyme cells and odontoblasts but not dental epithelial cells or nondental cells. Binding requires a heparan sulfate-containing receptor on the cell surface as well as an integrin. N-glycosylated.

The protein resides in the secreted. The protein localises to the extracellular space. It is found in the extracellular matrix. Its function is as follows. An adhesion molecule that interacts with extracellular matrix molecules in developing teeth and may play important roles in differentiation and maintenance of odontoblasts as well as in dentin formation. The polypeptide is Fibulin-7 (FBLN7) (Homo sapiens (Human)).